Consider the following 440-residue polypeptide: Methionine aminopeptidase 2-2 (440 aa).

Positions 1–102 are disordered; that stretch reads MAAQVPTEAL…KGQEEEYRDE (102 aa). Acidic residues predominate over residues 36-46; it reads DSDDSDEEGEE. Basic residues predominate over residues 56–70; that stretch reads AKKKKKNKKKKKKKS. A substrate-binding site is contributed by His194. A divalent metal cation contacts are provided by Asp214, Asp225, and His294. His302 contacts substrate. Positions 327 and 421 each coordinate a divalent metal cation.

The protein belongs to the peptidase M24A family. Methionine aminopeptidase eukaryotic type 2 subfamily. Co(2+) is required as a cofactor. The cofactor is Zn(2+). Mn(2+) serves as cofactor. It depends on Fe(2+) as a cofactor.

Its subcellular location is the cytoplasm. The catalysed reaction is Release of N-terminal amino acids, preferentially methionine, from peptides and arylamides.. Its function is as follows. Cotranslationally removes the N-terminal methionine from nascent proteins. The N-terminal methionine is often cleaved when the second residue in the primary sequence is small and uncharged (Met-Ala-, Cys, Gly, Pro, Ser, Thr, or Val). The protein is Methionine aminopeptidase 2-2 of Colletotrichum graminicola (strain M1.001 / M2 / FGSC 10212) (Maize anthracnose fungus).